Consider the following 1024-residue polypeptide: MTTITTAQIKSTLQSAKQSAANKLHSAGQSTKDALKKAAEQTRNAGNRLILLIPKDYKGQGSSLNDLVRTADELGIEVQYDEKNGTAITKQVFGTAEKLIGLTERGVTIFAPQLDKLLQKYQKAGNILGGGAENIGDNLGKAGGILSTFQNFLGTALSSMKIDELIKKQKSGGNVSSSELAKASIELINQLVDTVASLNNNVNSFSQQLNTLGSVLSNTKHLNGVGNKLQNLPNLDNIGAGLDTVSGILSAISASFILSNADADTRTKAAAGVELTTKVLGNVGKGISQYIIAQRAAQGLSTSAAAAGLIASAVTLAISPLSFLSIADKFKRANKIEEYSQRFKKLGYDGDSLLAAFHKETGAIDASLTTISTVLASVSSGISAAATTSLVGAPVSALVGAVTGIISGILEASKQAMFEHVASKMADVIAEWEKKHGKNYFENGYDARHAAFLEDNFKILSQYNKEYSVERSVLITQQHWDTLIGELAGVTRNGDKTLSGKSYIDYYEEGKRLEKKXDEFQKQVFDPLKGNIDLSDSKSSTLLKFVTPLLTPGEEIRERRQSGKYEYITELLVKGVDKWTVKGVQDKGAVYDYSNLIQHASVGNNQYREIRIESHLGDGDDKVFLSAGSANIYAGKGHDVVYYDKTDTGYLTIDGTKATEAGNYTVTRVLGGDVKVLQEVVKEQEVSVGKRTEKTQYRSYEFTHINGKNLTETDNLYSVEELIGTTRADKFFGSKFTDIFHGADGDDLIEGNDGNDRLYGDKGNDTLSGGNGDDQLYGGDGNDKLIGVAGNNYLNGGDGDDEFQVQGNSLAKNVLFGGKGNDKLYGSEGADLLDGGEGDDLLKGGYGNDIYRYLSGYGHHIIDDDGGKEDKLSLADIDFRDVAFKREGNDLIMYKGEGNVLSIGHKNGITFRNWFEKESGDISNHEIEQIFDKSGRIITPDSLKKALEYQQRNNKASYVYGNDALAYGSQGDLNPLINEISKIISAAGSFDVKEERTAASLLQLSGNASDFSYGRNSITLTTSA.

Residues 20 to 32 (AANKLHSAGQSTK) are compositionally biased toward polar residues. A disordered region spans residues 20–39 (AANKLHSAGQSTKDALKKAA). 3 helical membrane-spanning segments follow: residues 238–260 (IGAG…ILSN), 268–327 (KAAA…LSIA), and 365–411 (DASL…GILE). N6-myristoyl lysine attachment occurs at residues Lys564 and Lys690. 6 Hemolysin-type calcium-binding repeats span residues 732 to 749 (FGSK…DDLI), 750 to 767 (EGND…NDTL), 768 to 785 (SGGN…NDKL), 786 to 803 (IGVA…DDEF), 816 to 833 (FGGK…ADLL), and 834 to 851 (DGGE…NDIY).

Belongs to the RTX prokaryotic toxin (TC 1.C.11) family. Myristoylated by HlyC; the toxin only becomes active when modified. Mainly myristoylated, while a minor fraction is acylated with pentadecanoyl (C15:0; 26%) and heptadecanoyl (C17:0; 6%) fatty acyl groups. Fatty acylation is involved in binding to host membranes and promotes the irreversible insertion of Hemolysin into the host cell membrane. Can be activated by both myristoylation and palmitoylation, but HlyC catalyzes lysine myristoylation.

It localises to the secreted. The protein localises to the host cell membrane. In terms of biological role, bacterial hemolysins are exotoxins that attack blood cell membranes and cause cell rupture by forming a pore. This is Hemolysin, plasmid from Escherichia coli.